Consider the following 205-residue polypeptide: Adenylyl-sulfate kinase (205 aa).

31–38 lines the ATP pocket; sequence GLSGSGKS. The active-site Phosphoserine intermediate is S105.

The protein belongs to the APS kinase family.

The enzyme catalyses adenosine 5'-phosphosulfate + ATP = 3'-phosphoadenylyl sulfate + ADP + H(+). It functions in the pathway sulfur metabolism; hydrogen sulfide biosynthesis; sulfite from sulfate: step 2/3. Catalyzes the synthesis of activated sulfate. In Shewanella halifaxensis (strain HAW-EB4), this protein is Adenylyl-sulfate kinase.